The following is a 343-amino-acid chain: Acetylglutamate kinase (343 aa).

Residues 98-99 (GG), arginine 120, and asparagine 219 contribute to the substrate site.

This sequence belongs to the acetylglutamate kinase family. ArgB subfamily.

It localises to the cytoplasm. The enzyme catalyses N-acetyl-L-glutamate + ATP = N-acetyl-L-glutamyl 5-phosphate + ADP. It functions in the pathway amino-acid biosynthesis; L-arginine biosynthesis; N(2)-acetyl-L-ornithine from L-glutamate: step 2/4. Functionally, catalyzes the ATP-dependent phosphorylation of N-acetyl-L-glutamate. The chain is Acetylglutamate kinase from Frankia alni (strain DSM 45986 / CECT 9034 / ACN14a).